The sequence spans 291 residues: Protease HtpX (291 aa).

2 helical membrane-spanning segments follow: residues 4 to 24 (IALFLATNLAVMIVFSIVLNI) and 36 to 56 (LSGLLVMAVLFGFGGSLVSLL). His-143 provides a ligand contact to Zn(2+). The active site involves Glu-144. His-147 contributes to the Zn(2+) binding site. The next 2 membrane-spanning stretches (helical) occupy residues 151–171 (GDMITMTLMQGVVNTFVIFLS) and 199–219 (FIVSTVLEIAFGFLASFLTMW). Glu-225 is a binding site for Zn(2+).

This sequence belongs to the peptidase M48B family. Requires Zn(2+) as cofactor.

Its subcellular location is the cell inner membrane. The protein is Protease HtpX of Aliivibrio salmonicida (strain LFI1238) (Vibrio salmonicida (strain LFI1238)).